The following is a 454-amino-acid chain: CCA-adding enzyme (454 aa).

ATP-binding residues include Ser59 and Arg62. Residues Ser59 and Arg62 each coordinate CTP. Positions 71, 73, and 125 each coordinate Mg(2+). Residues His148, Lys167, and Tyr176 each coordinate ATP. CTP contacts are provided by His148, Lys167, and Tyr176.

This sequence belongs to the tRNA nucleotidyltransferase/poly(A) polymerase family. Archaeal CCA-adding enzyme subfamily. Homodimer. Mg(2+) is required as a cofactor.

The enzyme catalyses a tRNA precursor + 2 CTP + ATP = a tRNA with a 3' CCA end + 3 diphosphate. It carries out the reaction a tRNA with a 3' CCA end + 2 CTP + ATP = a tRNA with a 3' CCACCA end + 3 diphosphate. Catalyzes the addition and repair of the essential 3'-terminal CCA sequence in tRNAs without using a nucleic acid template. Adds these three nucleotides in the order of C, C, and A to the tRNA nucleotide-73, using CTP and ATP as substrates and producing inorganic pyrophosphate. tRNA 3'-terminal CCA addition is required both for tRNA processing and repair. Also involved in tRNA surveillance by mediating tandem CCA addition to generate a CCACCA at the 3' terminus of unstable tRNAs. While stable tRNAs receive only 3'-terminal CCA, unstable tRNAs are marked with CCACCA and rapidly degraded. This chain is CCA-adding enzyme, found in Methanosarcina acetivorans (strain ATCC 35395 / DSM 2834 / JCM 12185 / C2A).